We begin with the raw amino-acid sequence, 1300 residues long: DNA-directed RNA polymerase subunit beta (1300 aa).

Belongs to the RNA polymerase beta chain family. As to quaternary structure, the RNAP catalytic core consists of 2 alpha, 1 beta, 1 beta' and 1 omega subunit. When a sigma factor is associated with the core the holoenzyme is formed, which can initiate transcription.

The catalysed reaction is RNA(n) + a ribonucleoside 5'-triphosphate = RNA(n+1) + diphosphate. In terms of biological role, DNA-dependent RNA polymerase catalyzes the transcription of DNA into RNA using the four ribonucleoside triphosphates as substrates. The polypeptide is DNA-directed RNA polymerase subunit beta (Chlorobium chlorochromatii (strain CaD3)).